A 350-amino-acid polypeptide reads, in one-letter code: Biotin synthase (350 aa).

The Radical SAM core domain occupies 54–278; sequence REIQLSTLLS…TMPQSYVRLS (225 aa). 3 residues coordinate [4Fe-4S] cluster: Cys-69, Cys-73, and Cys-76. The [2Fe-2S] cluster site is built by Cys-113, Cys-144, Cys-204, and Arg-276.

This sequence belongs to the radical SAM superfamily. Biotin synthase family. In terms of assembly, homodimer. The cofactor is [4Fe-4S] cluster. Requires [2Fe-2S] cluster as cofactor.

The enzyme catalyses (4R,5S)-dethiobiotin + (sulfur carrier)-SH + 2 reduced [2Fe-2S]-[ferredoxin] + 2 S-adenosyl-L-methionine = (sulfur carrier)-H + biotin + 2 5'-deoxyadenosine + 2 L-methionine + 2 oxidized [2Fe-2S]-[ferredoxin]. The protein operates within cofactor biosynthesis; biotin biosynthesis; biotin from 7,8-diaminononanoate: step 2/2. Functionally, catalyzes the conversion of dethiobiotin (DTB) to biotin by the insertion of a sulfur atom into dethiobiotin via a radical-based mechanism. The protein is Biotin synthase of Neisseria meningitidis serogroup A / serotype 4A (strain DSM 15465 / Z2491).